Consider the following 214-residue polypeptide: MVSANREMAVYCFDTLVSHYNNEETPPPAFEEANHPLFVTWKKIVNGGEPRLRGCIGTLEARRLISGFKDYALTSALRDRRFPPIQAKELPSLQCTVSVLTDYEDAEDYLDWEVGKHGIIIEFTEPETNTKRSATYLPEVPAHEGWTKIEAIDSLVRKAGYNGVITEAVRRRINLTRYQSTLFSMHYSEYLSYVKATRGVVGPVINGINKHAFA.

The AMMECR1 domain occupies 1–194; it reads MVSANREMAV…MHYSEYLSYV (194 aa).

This is an uncharacterized protein from Arabidopsis thaliana (Mouse-ear cress).